A 509-amino-acid chain; its full sequence is Apurinic-apyrimidinic endonuclease 1 (509 aa).

The N-terminal stretch at 1-24 is a signal peptide; sequence MPRHCCCFVFHFLLYMLLINIVKN. A disordered region spans residues 144–188; sequence EEKDEECDEKTKQDNNKENIKNETIVQKKKIDKNNKTKEKIKTKS. 2 stretches are compositionally biased toward basic and acidic residues: residues 152–164 and 175–188; these read EKTK…ENIK and DKNN…KTKS. Zn(2+) contacts are provided by His-291, His-331, Glu-367, Asp-401, His-404, His-438, Asp-451, His-453, and Glu-483. His-404 provides a ligand contact to Mn(2+). Residues Asp-451 and His-453 each coordinate Mn(2+).

Belongs to the AP endonuclease 2 family. Zn(2+) is required as a cofactor. It depends on Mn(2+) as a cofactor. May be proteolytically cleaved.

The protein resides in the mitochondrion. Functionally, plays a role in mitochondrial DNA base excision repair (BER) pathway induced by oxidative stress. Has apurinic/apyrimidinic (AP) endonuclease activity towards double-stranded DNA (dsDNA) with a preference for C as opposite base. Has 3'-phosphatase activity; removes 3'-phosphate from blunt-end, recessed, and gapped DNA templates and thus, removes 3'-blocks for DNA polymerase activity during BER. Lacks 3'-5' exonuclease activity and does not cleave damaged bases by nucleotide incision repair (NIR). The sequence is that of Apurinic-apyrimidinic endonuclease 1 from Plasmodium berghei (strain Anka).